The chain runs to 358 residues: 3-dehydroquinate synthase (358 aa).

NAD(+) contacts are provided by residues 70–75 (DGEQYK), 104–108 (GVVGD), 128–129 (TT), Lys-141, Lys-150, and 168–171 (CLNT). Residues Glu-183, His-246, and His-263 each contribute to the Zn(2+) site.

Belongs to the sugar phosphate cyclases superfamily. Dehydroquinate synthase family. Co(2+) serves as cofactor. It depends on Zn(2+) as a cofactor. Requires NAD(+) as cofactor.

Its subcellular location is the cytoplasm. It catalyses the reaction 7-phospho-2-dehydro-3-deoxy-D-arabino-heptonate = 3-dehydroquinate + phosphate. Its pathway is metabolic intermediate biosynthesis; chorismate biosynthesis; chorismate from D-erythrose 4-phosphate and phosphoenolpyruvate: step 2/7. Functionally, catalyzes the conversion of 3-deoxy-D-arabino-heptulosonate 7-phosphate (DAHP) to dehydroquinate (DHQ). In Shewanella sediminis (strain HAW-EB3), this protein is 3-dehydroquinate synthase.